The sequence spans 264 residues: CD320 antigen (264 aa).

An N-terminal signal peptide occupies residues 1–28 (MARCGAGRAAALGLVLRLLLGLRTGPEA). The LDL-receptor class A 1 domain occupies 50–87 (SCPTDTFKCLTSGYCVPLSWRCDGDRDCSDGSDEEECR). 3 cysteine pairs are disulfide-bonded: C51/C64, C58/C77, and C71/C86. W69, D72, D74, D76, D82, and E83 together coordinate Ca(2+). Residue N122 is glycosylated (N-linked (GlcNAc...) asparagine). Positions 127-164 (PCQEGELRCILDDVCIPHTWRCDGHPDCPDSSDELSCD) constitute an LDL-receptor class A 2 domain. Cystine bridges form between C128-C141, C135-C154, and C148-C163. Ca(2+)-binding residues include W146, D149, H151, D153, D159, and E160. N-linked (GlcNAc...) asparagine glycosylation occurs at N195. The chain crosses the membrane as a helical span at residues 213-233 (VIAAAGVLSAILVSATILILL).

As to quaternary structure, interacts (via LDL-receptor class A domains) with TCN2.

It localises to the cell membrane. Receptor for transcobalamin saturated with cobalamin (TCbl). Plays an important role in cobalamin uptake. Plasma membrane protein that is expressed on follicular dendritic cells (FDC) and mediates interaction with germinal center B cells. Functions as a costimulator to promote B cell responses to antigenic stimuli; promotes B cell differentiation and proliferation. Germinal center-B (GC-B) cells differentiate into memory B-cells and plasma cells (PC) through interaction with T-cells and follicular dendritic cells (FDC). CD320 augments the proliferation of PC precursors generated by IL-10. This Rattus norvegicus (Rat) protein is CD320 antigen (Cd320).